The primary structure comprises 51 residues: uncharacterized protein (51 aa).

Residues 1-42 (MKMKTNKYMNMVRPAPPRRADPEGVRDPSTMGGGPNPFLRRS) form a disordered region.

Its subcellular location is the mitochondrion. This is an uncharacterized protein from Saccharomyces cerevisiae (strain ATCC 204508 / S288c) (Baker's yeast).